A 146-amino-acid polypeptide reads, in one-letter code: Large ribosomal subunit protein uL15 (146 aa).

Residues 1–13 show a composition bias toward basic and acidic residues; it reads MKLHELYPAEGSR. Residues 1-55 are disordered; the sequence is MKLHELYPAEGSRKVRNRVGRGAATGNGKTSGRGQKGQKARSGGKVRPGFEGGQL. Positions 23–35 are enriched in gly residues; that stretch reads AATGNGKTSGRGQ.

The protein belongs to the universal ribosomal protein uL15 family. Part of the 50S ribosomal subunit.

Binds to the 23S rRNA. This Staphylococcus carnosus (strain TM300) protein is Large ribosomal subunit protein uL15.